We begin with the raw amino-acid sequence, 436 residues long: MRFKDQVHFIRRNMKKNRLRVFMTILATTMACAFLVVLSSVGFGIQKTITDMTMSQQIVTKVSVMGKEGDKPIKKADLEKYDHVRSVVERTQVYEPNKATLGNRTNESSNLIFTNMNDELKANMELEKGRVAKSENEIVVGYDFAKRLLTKKESEEYNKKIEEAKGNPEDIKEPKGYTKDILNKTIELSVSKTDSKTGDVTKTKTYDFKIVGITKKPSQDWMEDSNIFISDQFKKDFSEFLDFKGGNVETNIGVFADKFENVEQLTNDLTDDGYYVTSVTTELEGANTFFMVFKIGLIFVGCIAVIISAIGIFNTMTMAVTERTQEIGIMKAIGASPSIIRRMFLMESAYIGILGCVIGIIISYGVSYLVNLAVPMILAATSGGDAGDLNYTFSYIPASLVIIAVVICGGVAVISGMNPARKATKTNVLTALRREL.

The signal sequence occupies residues 1–31; the sequence is MRFKDQVHFIRRNMKKNRLRVFMTILATTMA. The N-palmitoyl cysteine moiety is linked to residue cysteine 32. Cysteine 32 carries S-diacylglycerol cysteine lipidation. Residues 115–165 adopt a coiled-coil conformation; sequence NMNDELKANMELEKGRVAKSENEIVVGYDFAKRLLTKKESEEYNKKIEEAK. The next 3 membrane-spanning stretches (helical) occupy residues 293–313, 350–370, and 396–416; these read FKIG…IGIF, YIGI…SYLV, and IPAS…VISG.

This sequence belongs to the ABC-4 integral membrane protein family. As to quaternary structure, the complex is composed of 2 ATP-binding proteins (YtrB and YtrE), 2 transmembrane proteins (YtrC and YtrD) and a solute-binding protein (YtrF).

It localises to the cell membrane. In terms of biological role, part of the ABC transporter complex YtrBCDEF that plays a role in acetoin utilization during stationary phase and sporulation. The chain is ABC transporter permease YtrF (ytrF) from Bacillus subtilis (strain 168).